Reading from the N-terminus, the 311-residue chain is Alpha/beta hydrolase domain-containing protein 17C (311 aa).

A disordered region spans residues glutamate 48–alanine 67. Active-site charge relay system residues include serine 193, aspartate 258, and histidine 287.

It belongs to the AB hydrolase superfamily. ABHD17 family. In terms of processing, palmitoylated on cysteine residues located in a cysteine cluster at the N-terminus which promotes membrane localization.

The protein localises to the recycling endosome membrane. Its subcellular location is the cell projection. The protein resides in the dendritic spine. It is found in the postsynaptic density membrane. It catalyses the reaction S-hexadecanoyl-L-cysteinyl-[protein] + H2O = L-cysteinyl-[protein] + hexadecanoate + H(+). Functionally, hydrolyzes fatty acids from S-acylated cysteine residues in proteins. Has depalmitoylating activity towards NRAS. The polypeptide is Alpha/beta hydrolase domain-containing protein 17C (Xenopus laevis (African clawed frog)).